The chain runs to 27 residues: Phospholipase A2 taicatoxin (27 aa).

Belongs to the phospholipase A2 family. Group I subfamily. Heterotrimer composed of an alpha-neurotoxin-like peptide of 8 kDa (AC P0CJ35), this neurotoxic phospholipase of 16 kDa and a serine protease inhibitor of 7 kDa (AC B7S4N9) at an approximate stoichiometry of 1:1:4; non-covalently linked. The cofactor is Ca(2+). Post-translationally, contains 7 disulfide bonds. In terms of tissue distribution, expressed by the venom gland.

It is found in the secreted. It carries out the reaction a 1,2-diacyl-sn-glycero-3-phosphocholine + H2O = a 1-acyl-sn-glycero-3-phosphocholine + a fatty acid + H(+). In terms of biological role, heterotrimer: blocks the voltage-dependent L-type calcium channels from the heart, and the small conductance calcium-activated potassium channels in the chromaffin cells and in the brain. Is very toxic to mice. Its function is as follows. Monomer: Snake venom phospholipase A2 (PLA2) that has neurotoxic activities. Voltage-dependently affects ionic currents in chick (Gallus domesticus) dorsal root ganglion cells. PLA2 catalyzes the calcium-dependent hydrolysis of the 2-acyl groups in 3-sn-phosphoglycerides. This Oxyuranus scutellatus scutellatus (Australian taipan) protein is Phospholipase A2 taicatoxin.